Here is a 533-residue protein sequence, read N- to C-terminus: E3 ubiquitin-protein ligase MGRN1 (533 aa).

Gly2 carries the N-myristoyl glycine lipid modification. The RING-type zinc-finger motif lies at 278–317 (ECVVCLSDLRDTLILPCRHLCLCTSCADTLRYQANNCPIC). The short motif at 385–388 (PSAP) is the Required for TSG101-binding element. Tyr390 carries the phosphotyrosine modification. The segment at 421 to 519 (QKGKTQSKSP…QPVPPADIYL (99 aa)) is disordered. Residues 423–439 (GKTQSKSPDSTLRSPSS) are compositionally biased toward polar residues. 3 positions are modified to phosphoserine: Ser429, Ser450, and Ser502. Acidic residues predominate over residues 443–454 (EEDEEKLSEDPE).

Interacts with MC1R and MC4R. Interacts with TSG101. Interacts with mislocalized cytosolically exposed PRNP; this interaction alters MGRN1 subcellular location and causes lysosomal enlargement. Autoubiquitinated in vitro.

The protein localises to the cytoplasm. Its subcellular location is the cytosol. The protein resides in the cell membrane. It is found in the early endosome. It catalyses the reaction S-ubiquitinyl-[E2 ubiquitin-conjugating enzyme]-L-cysteine + [acceptor protein]-L-lysine = [E2 ubiquitin-conjugating enzyme]-L-cysteine + N(6)-ubiquitinyl-[acceptor protein]-L-lysine.. It functions in the pathway protein modification; protein ubiquitination. Functionally, E3 ubiquitin-protein ligase. Mediates TSG101 monoubiquitination at multiple sites. Plays a role in the regulation of endosome-to-lysosome trafficking. Impairs MC1R- and MC4R-signaling by competing with GNAS-binding to MCRs and inhibiting agonist-induced cAMP production. Does not inhibit ADRB2-signaling. Does not promote MC1R ubiquitination. Also acts as a negative regulator of hedgehog signaling. This is E3 ubiquitin-protein ligase MGRN1 (Mgrn1) from Rattus norvegicus (Rat).